Here is a 362-residue protein sequence, read N- to C-terminus: Microfibril-associated glycoprotein 3 (362 aa).

An N-terminal signal peptide occupies residues 1-19; sequence MKLHCCLFTLVASIIVPAA. The Extracellular portion of the chain corresponds to 20–146; it reads FVLEDVDFNQ…TLRVIFTSGD (127 aa). N-linked (GlcNAc...) asparagine glycosylation is found at Asn-36, Asn-41, and Asn-110. The Ig-like C2-type domain maps to 45 to 137; it reads PSSFELSASS…SPIRASYSVT (93 aa). Cys-73 and Cys-124 form a disulfide bridge. The helical transmembrane segment at 147-167 threads the bilayer; it reads MSVYYMIVCLIAFTITLILNV. Over 168–362 the chain is Cytoplasmic; that stretch reads TRLCMMSSHL…KDGAYENSQL (195 aa). Disordered stretches follow at residues 282-306 and 319-362; these read GIYVINPEMGRSNSPGGDSDDGSLN and HLQS…NSQL. The segment covering 319 to 337 has biased composition (polar residues); sequence HLQSETKSIDTESQGSSHF.

In terms of processing, glycosylated.

The protein localises to the cell membrane. Its function is as follows. Component of the elastin-associated microfibrils. The protein is Microfibril-associated glycoprotein 3 (MFAP3) of Pongo abelii (Sumatran orangutan).